The sequence spans 444 residues: Acyl-CoA 6-desaturase (444 aa).

Topologically, residues 1 to 131 (MGKGGNQGEG…DMNLFKTNHV (131 aa)) are cytoplasmic. The region spanning 18–95 (VPTFSWEEIQ…LKPLLIGELA (78 aa)) is the Cytochrome b5 heme-binding domain. Residues 132–152 (FFLLLLAHIIALESIAWFTVF) traverse the membrane as a helical segment. At 153–157 (YFGNG) the chain is on the lumenal side. Residues 158–178 (WISTLITAFVLATSQAQAGWL) traverse the membrane as a helical segment. At 179-264 (QHDYGHLSVY…KYLPYNHQHE (86 aa)) the chain is on the cytoplasmic side. Positions 180–184 (HDYGH) match the Histidine box-1 motif. The short motif at 217–221 (HFQHH) is the Histidine box-2 element. A helical transmembrane segment spans residues 265–285 (YFFLIGPPLLIPMYFQYQIIM). The Lumenal segment spans residues 286 to 305 (TMIVHKNWVDLAWAISYYIR). The chain crosses the membrane as a helical span at residues 306–326 (FFITYIPFYGILGALLFLNFI). Over 327–444 (RFLESHWFVW…KLWLDAYLHK (118 aa)) the chain is Cytoplasmic. The short motif at 382 to 386 (QIEHH) is the Histidine box-3 element.

It belongs to the fatty acid desaturase type 1 family.

It is found in the endoplasmic reticulum membrane. The catalysed reaction is (9Z,12Z)-octadecadienoyl-CoA + 2 Fe(II)-[cytochrome b5] + O2 + 2 H(+) = (6Z,9Z,12Z)-octadecatrienoyl-CoA + 2 Fe(III)-[cytochrome b5] + 2 H2O. It catalyses the reaction (9Z,12Z,15Z)-octadecatrienoyl-CoA + 2 Fe(II)-[cytochrome b5] + O2 + 2 H(+) = (6Z,9Z,12Z,15Z)-octadecatetraenoyl-CoA + 2 Fe(III)-[cytochrome b5] + 2 H2O. It carries out the reaction (9Z,12Z,15Z,18Z,21Z)-tetracosapentaenoyl-CoA + 2 Fe(II)-[cytochrome b5] + O2 + 2 H(+) = (6Z,9Z,12Z,15Z,18Z,21Z)-tetracosahexaenoyl-CoA + 2 Fe(III)-[cytochrome b5] + 2 H2O. The enzyme catalyses (11E)-octadecenoyl-CoA + 2 Fe(II)-[cytochrome b5] + O2 + 2 H(+) = (6Z,11E)-octadecadienoyl-CoA + 2 Fe(III)-[cytochrome b5] + 2 H2O. The catalysed reaction is (11Z,14Z)-eicosadienoyl-CoA + 2 Fe(II)-[cytochrome b5] + O2 + 2 H(+) = (8Z,11Z,14Z)-eicosatrienoyl-CoA + 2 Fe(III)-[cytochrome b5] + 2 H2O. It catalyses the reaction (11Z,14Z,17Z)-eicosatrienoyl-CoA + 2 Fe(II)-[cytochrome b5] + O2 + 2 H(+) = (8Z,11Z,14Z,17Z)-eicosatetraenoyl-CoA + 2 Fe(III)-[cytochrome b5] + 2 H2O. Its pathway is lipid metabolism; polyunsaturated fatty acid biosynthesis. Its function is as follows. Involved in the biosynthesis of highly unsaturated fatty acids (HUFA) from the essential polyunsaturated fatty acids (PUFA) linoleic acid (LA) (18:2n-6) and alpha-linolenic acid (ALA) (18:3n-3) precursors, acting as a fatty acyl-coenzyme A (CoA) desaturase that introduces a cis double bond at carbon 6 of the fatty acyl chain. Catalyzes the first and rate limiting step in this pathway which is the desaturation of LA (18:2n-6) and ALA (18:3n-3) into gamma-linoleate (GLA) (18:3n-6) and stearidonate (18:4n-3), respectively. Subsequently, in the biosynthetic pathway of HUFA n-3 series, it desaturates tetracosapentaenoate (24:5n-3) to tetracosahexaenoate (24:6n-3), which is then converted to docosahexaenoate (DHA)(22:6n-3), an important lipid for nervous system function. It can also desaturate (11E)-octadecenoate (trans-vaccenoate) at carbon 6 generating (6Z,11E)-octadecadienoate. In addition to Delta-6 activity, this enzyme exhibits Delta-8 activity with slight biases toward n-3 fatty acyl-CoA substrates. In Pongo abelii (Sumatran orangutan), this protein is Acyl-CoA 6-desaturase (FADS2).